A 443-amino-acid polypeptide reads, in one-letter code: Serine--tRNA ligase (443 aa).

T246 to E248 is an L-serine binding site. R277 to E279 is a binding site for ATP. E300 serves as a coordination point for L-serine. E367–S370 is a binding site for ATP. Residue S402 participates in L-serine binding.

The protein belongs to the class-II aminoacyl-tRNA synthetase family. Type-1 seryl-tRNA synthetase subfamily. Homodimer. The tRNA molecule binds across the dimer.

Its subcellular location is the cytoplasm. The catalysed reaction is tRNA(Ser) + L-serine + ATP = L-seryl-tRNA(Ser) + AMP + diphosphate + H(+). It catalyses the reaction tRNA(Sec) + L-serine + ATP = L-seryl-tRNA(Sec) + AMP + diphosphate + H(+). It functions in the pathway aminoacyl-tRNA biosynthesis; selenocysteinyl-tRNA(Sec) biosynthesis; L-seryl-tRNA(Sec) from L-serine and tRNA(Sec): step 1/1. Catalyzes the attachment of serine to tRNA(Ser). Is also able to aminoacylate tRNA(Sec) with serine, to form the misacylated tRNA L-seryl-tRNA(Sec), which will be further converted into selenocysteinyl-tRNA(Sec). In Bradyrhizobium diazoefficiens (strain JCM 10833 / BCRC 13528 / IAM 13628 / NBRC 14792 / USDA 110), this protein is Serine--tRNA ligase.